A 313-amino-acid polypeptide reads, in one-letter code: ADP-L-glycero-D-manno-heptose-6-epimerase (313 aa).

NADP(+) is bound by residues 10-11 (FI), 31-32 (DD), arginine 38, lysine 53, 75-79 (EGACS), and asparagine 92. Tyrosine 139 (proton acceptor) is an active-site residue. Lysine 143 contacts NADP(+). Asparagine 168 serves as a coordination point for substrate. Positions 169 and 177 each coordinate NADP(+). Residue lysine 177 is the Proton acceptor of the active site. Residues lysine 179, histidine 186, 200–203 (FEGW), arginine 213, and tyrosine 277 each bind substrate.

It belongs to the NAD(P)-dependent epimerase/dehydratase family. HldD subfamily. As to quaternary structure, homopentamer. NADP(+) serves as cofactor.

The enzyme catalyses ADP-D-glycero-beta-D-manno-heptose = ADP-L-glycero-beta-D-manno-heptose. Its pathway is nucleotide-sugar biosynthesis; ADP-L-glycero-beta-D-manno-heptose biosynthesis; ADP-L-glycero-beta-D-manno-heptose from D-glycero-beta-D-manno-heptose 7-phosphate: step 4/4. In terms of biological role, catalyzes the interconversion between ADP-D-glycero-beta-D-manno-heptose and ADP-L-glycero-beta-D-manno-heptose via an epimerization at carbon 6 of the heptose. This Marinobacter nauticus (strain ATCC 700491 / DSM 11845 / VT8) (Marinobacter aquaeolei) protein is ADP-L-glycero-D-manno-heptose-6-epimerase.